The chain runs to 400 residues: Proline-rich protein 5 (400 aa).

Residues 301 to 358 (TDSTSKLSMAGTKPPGEGERPPISNGQFPPLHNLSDSQQGLYNSQRDSPLLPAPSSSP) are disordered. The span at 334-347 (LSDSQQGLYNSQRD) shows a compositional bias: polar residues. Residues 348 to 358 (SPLLPAPSSSP) are compositionally biased toward low complexity.

It belongs to the PROTOR family. As to quaternary structure, associated component of the mechanistic target of rapamycin complex 2 (mTORC2).

Functionally, associated subunit of mTORC2, which regulates cell growth and survival in response to hormonal signals. This Xenopus laevis (African clawed frog) protein is Proline-rich protein 5 (prr5).